Reading from the N-terminus, the 159-residue chain is Crossover junction endodeoxyribonuclease RuvC (159 aa).

Residues Asp-7, Glu-67, and Asp-139 contribute to the active site. Residues Asp-7, Glu-67, and Asp-139 each coordinate Mg(2+).

It belongs to the RuvC family. In terms of assembly, homodimer which binds Holliday junction (HJ) DNA. The HJ becomes 2-fold symmetrical on binding to RuvC with unstacked arms; it has a different conformation from HJ DNA in complex with RuvA. In the full resolvosome a probable DNA-RuvA(4)-RuvB(12)-RuvC(2) complex forms which resolves the HJ. It depends on Mg(2+) as a cofactor.

The protein resides in the cytoplasm. It catalyses the reaction Endonucleolytic cleavage at a junction such as a reciprocal single-stranded crossover between two homologous DNA duplexes (Holliday junction).. The RuvA-RuvB-RuvC complex processes Holliday junction (HJ) DNA during genetic recombination and DNA repair. Endonuclease that resolves HJ intermediates. Cleaves cruciform DNA by making single-stranded nicks across the HJ at symmetrical positions within the homologous arms, yielding a 5'-phosphate and a 3'-hydroxyl group; requires a central core of homology in the junction. The consensus cleavage sequence is 5'-(A/T)TT(C/G)-3'. Cleavage occurs on the 3'-side of the TT dinucleotide at the point of strand exchange. HJ branch migration catalyzed by RuvA-RuvB allows RuvC to scan DNA until it finds its consensus sequence, where it cleaves and resolves the cruciform DNA. This is Crossover junction endodeoxyribonuclease RuvC from Orientia tsutsugamushi (strain Ikeda) (Rickettsia tsutsugamushi).